Here is a 122-residue protein sequence, read N- to C-terminus: Large ribosomal subunit protein uL14 (122 aa).

This sequence belongs to the universal ribosomal protein uL14 family. As to quaternary structure, part of the 50S ribosomal subunit. Forms a cluster with proteins L3 and L19. In the 70S ribosome, L14 and L19 interact and together make contacts with the 16S rRNA in bridges B5 and B8.

Functionally, binds to 23S rRNA. Forms part of two intersubunit bridges in the 70S ribosome. The sequence is that of Large ribosomal subunit protein uL14 from Delftia acidovorans (strain DSM 14801 / SPH-1).